A 369-amino-acid chain; its full sequence is Iron-sulfur cluster assembly SufBD family protein AF_2365 (369 aa).

Belongs to the iron-sulfur cluster assembly SufBD family.

This Archaeoglobus fulgidus (strain ATCC 49558 / DSM 4304 / JCM 9628 / NBRC 100126 / VC-16) protein is Iron-sulfur cluster assembly SufBD family protein AF_2365.